A 98-amino-acid chain; its full sequence is Large ribosomal subunit protein uL23 (98 aa).

It belongs to the universal ribosomal protein uL23 family. As to quaternary structure, part of the 50S ribosomal subunit. Contacts protein L29, and trigger factor when it is bound to the ribosome.

In terms of biological role, one of the early assembly proteins it binds 23S rRNA. One of the proteins that surrounds the polypeptide exit tunnel on the outside of the ribosome. Forms the main docking site for trigger factor binding to the ribosome. The chain is Large ribosomal subunit protein uL23 from Legionella pneumophila (strain Paris).